Reading from the N-terminus, the 335-residue chain is Calcium-binding protein TgpCaBP (335 aa).

A helical membrane pass occupies residues 30 to 50 (LPLCVFSLFLFSFAFSALSGA). 4 consecutive EF-hand domains span residues 113-148 (MHQHQVRMEFQAIDKDNDGKVSLSELEATYVDSLDQ), 153-188 (QHKKEVEQRFKTVDKDNDGLLDLSEIRILMDPGKDE), 190-225 (LMKIEIEEILNAQDKNGDRKITVTEFIETEGTGSLN), and 227-262 (VEKTELEKEFKSYDLNADGAIDVEELQQIIKDPHSH). Ca(2+)-binding residues include Asp126, Asp128, Asp130, Lys132, Glu137, Asp166, Asp168, Asp170, Glu177, Asp203, Asn205, Asp207, Lys209, Glu214, Asp240, Asn242, Asp244, and Glu251. The Prevents secretion from ER motif lies at 332–335 (HDEL).

The protein localises to the endoplasmic reticulum membrane. It is found in the cytoplasm. The protein resides in the cytosol. In terms of biological role, calcium-binding protein. Participates in the efflux of intracellular Ca(2+) and storage of Ca(2+) in the endoplasmic reticulum. Required for gliding, host cell invasion and egress. Required for microneme secretion. This Toxoplasma gondii protein is Calcium-binding protein TgpCaBP.